The following is a 100-amino-acid chain: Carboxysome shell vertex protein CcmL (100 aa).

One can recognise a BMV domain in the interval 1-83 (MQIGRVRGTV…VDAVVIGIID (83 aa)).

The protein belongs to the CcmL/EutN family. CcmL subfamily. In terms of assembly, homopentamer. Interacts with full-length CcmM.

It is found in the carboxysome. In terms of biological role, probably forms vertices in the carboxysome, a polyhedral inclusion where RuBisCO (ribulose bisphosphate carboxylase, rbcL-rbcS) is sequestered. Has been modeled to induce curvature upon insertion into an otherwise flat hexagonal molecular layer of CcmK subunits. This is Carboxysome shell vertex protein CcmL from Gloeobacter violaceus (strain ATCC 29082 / PCC 7421).